The primary structure comprises 145 residues: D-aminoacyl-tRNA deacylase (145 aa).

Residues 137–138 carry the Gly-cisPro motif, important for rejection of L-amino acids motif; it reads GP.

It belongs to the DTD family. As to quaternary structure, homodimer.

The protein resides in the cytoplasm. It carries out the reaction glycyl-tRNA(Ala) + H2O = tRNA(Ala) + glycine + H(+). The enzyme catalyses a D-aminoacyl-tRNA + H2O = a tRNA + a D-alpha-amino acid + H(+). In terms of biological role, an aminoacyl-tRNA editing enzyme that deacylates mischarged D-aminoacyl-tRNAs. Also deacylates mischarged glycyl-tRNA(Ala), protecting cells against glycine mischarging by AlaRS. Acts via tRNA-based rather than protein-based catalysis; rejects L-amino acids rather than detecting D-amino acids in the active site. By recycling D-aminoacyl-tRNA to D-amino acids and free tRNA molecules, this enzyme counteracts the toxicity associated with the formation of D-aminoacyl-tRNA entities in vivo and helps enforce protein L-homochirality. This chain is D-aminoacyl-tRNA deacylase, found in Brevibacillus brevis (strain 47 / JCM 6285 / NBRC 100599).